Here is a 477-residue protein sequence, read N- to C-terminus: Glutamate--tRNA ligase 1 (477 aa).

Residues 12-22 (PSPTGALHLGN) carry the 'HIGH' region motif. The short motif at 253 to 257 (PLSKR) is the 'KMSKS' region element. Lysine 256 serves as a coordination point for ATP.

Belongs to the class-I aminoacyl-tRNA synthetase family. Glutamate--tRNA ligase type 1 subfamily. In terms of assembly, monomer.

It is found in the cytoplasm. The catalysed reaction is tRNA(Glu) + L-glutamate + ATP = L-glutamyl-tRNA(Glu) + AMP + diphosphate. Catalyzes the attachment of glutamate to tRNA(Glu) in a two-step reaction: glutamate is first activated by ATP to form Glu-AMP and then transferred to the acceptor end of tRNA(Glu). The sequence is that of Glutamate--tRNA ligase 1 from Halorhodospira halophila (strain DSM 244 / SL1) (Ectothiorhodospira halophila (strain DSM 244 / SL1)).